A 103-amino-acid polypeptide reads, in one-letter code: Small ribosomal subunit protein uS10 (103 aa).

Belongs to the universal ribosomal protein uS10 family. Part of the 30S ribosomal subunit.

Involved in the binding of tRNA to the ribosomes. The polypeptide is Small ribosomal subunit protein uS10 (Picrophilus torridus (strain ATCC 700027 / DSM 9790 / JCM 10055 / NBRC 100828 / KAW 2/3)).